Consider the following 571-residue polypeptide: Cilia- and flagella-associated protein 52 (571 aa).

WD repeat units lie at residues glycine 62 to arginine 106, leucine 109 to glycine 150, leucine 156 to tryptophan 195, glutamine 288 to isoleucine 327, cysteine 330 to asparagine 364, alanine 366 to glutamate 405, glutamate 410 to methionine 449, leucine 451 to glutamate 490, serine 494 to valine 533, and glycine 536 to serine 571.

Belongs to the CFAP52 family. In terms of assembly, microtubule inner protein component of sperm flagellar doublet microtubules. Interacts with BRCA2. Interacts with the CCT chaperonin complex. Interacts with HSP70. Interacts with AK8. Interacts with CFAP45. Interacts with DNAI1. Interacts with IQDC.

Its subcellular location is the cytoplasm. The protein localises to the cytoskeleton. It is found in the cilium axoneme. The protein resides in the flagellum axoneme. In terms of biological role, microtubule inner protein (MIP) part of the dynein-decorated doublet microtubules (DMTs) in cilia axoneme. Important for proper ciliary and flagellar beating. May act in cooperation with CFAP45 and axonemal dynein subunit DNAH11. May play a role in cell growth and/or survival. The sequence is that of Cilia- and flagella-associated protein 52 from Macaca fascicularis (Crab-eating macaque).